The primary structure comprises 1755 residues: Transposon TyH3 Gag-Pol polyprotein (1755 aa).

Composition is skewed to polar residues over residues 1-23, 48-60, and 127-152; these read MESQQLSQHSPNSHGSACASVTS, TKANSQQTTTPAS, and QSQFPQYPSSVGTPLSTPSPESGNTF. Disordered regions lie at residues 1 to 93, 126 to 173, and 352 to 421; these read MESQ…MMTQ, PQSQ…RPPP, and GSRN…SKST. Over residues 153 to 165 the composition is skewed to low complexity; that stretch reads TDSSSADSDMTST. Positions 299–401 are RNA-binding; sequence NNGIHINNKV…NSKSKTARAH (103 aa). Positions 402–418 are enriched in low complexity; that stretch reads NVSTSNNSPSTDNDSIS. Position 416 is a phosphoserine (Ser416). Asp461 functions as the For protease activity; shared with dimeric partner in the catalytic mechanism. The integrase-type zinc finger-like stretch occupies residues 583-640; the sequence is NVHTSESTRKYPYPFIHRMLAHANAQTIRYSLKNNTITYFNESDVDWSSAIDYQCPDC. Residues 660–835 enclose the Integrase catalytic domain; sequence NSYEPFQYLH…AGLDISTLLP (176 aa). Asp671 and Asp736 together coordinate Mg(2+). Disordered stretches follow at residues 956 to 1087, 1092 to 1111, and 1130 to 1187; these read SKAV…ETEK, RSPSIDASPPENNSSHNIVP, and DLPL…DNET. Residues 960-969 show a composition bias toward low complexity; the sequence is SPTDSTPPST. A compositionally biased stretch (polar residues) spans 1005–1015; the sequence is STPQISNIEST. Basic and acidic residues predominate over residues 1038–1053; it reads ESSHASKSKDFRHSDS. Composition is skewed to polar residues over residues 1054–1082 and 1101–1111; these read YSENETNHTNVPISSTGGTNNKTVPQISD and PENNSSHNIVP. The short motif at 1178-1212 is the Bipartite nuclear localization signal element; sequence KKRSLEDNETEIKVSRDTWNTKNMRSLEPPRSKKR. Residues 1338–1476 form the Reverse transcriptase Ty1/copia-type domain; that stretch reads NNYYITQLDI…DILGLEIKYQ (139 aa). The Mg(2+) site is built by Asp1346, Asp1427, Asp1428, Asp1610, Glu1652, and Asp1685. The RNase H Ty1/copia-type domain occupies 1610–1752; sequence DASYGNQPYY…IKTFKLLTNK (143 aa).

The capsid protein forms a homotrimer, from which the VLPs are assembled. The protease is a homodimer, whose active site consists of two apposed aspartic acid residues. In terms of processing, initially, virus-like particles (VLPs) are composed of the structural unprocessed proteins Gag and Gag-Pol, and also contain the host initiator methionine tRNA (tRNA(i)-Met) which serves as a primer for minus-strand DNA synthesis, and a dimer of genomic Ty RNA. Processing of the polyproteins occurs within the particle and proceeds by an ordered pathway, called maturation. First, the protease (PR) is released by autocatalytic cleavage of the Gag-Pol polyprotein yielding capsid protein p45 and a Pol-p154 precursor protein. This cleavage is a prerequisite for subsequent processing of Pol-p154 at the remaining sites to release the mature structural and catalytic proteins. Maturation takes place prior to the RT reaction and is required to produce transposition-competent VLPs.

The protein resides in the cytoplasm. It localises to the nucleus. The catalysed reaction is DNA(n) + a 2'-deoxyribonucleoside 5'-triphosphate = DNA(n+1) + diphosphate. The enzyme catalyses Endonucleolytic cleavage to 5'-phosphomonoester.. In terms of biological role, capsid protein (CA) is the structural component of the virus-like particle (VLP), forming the shell that encapsulates the retrotransposons dimeric RNA genome. The particles are assembled from trimer-clustered units and there are holes in the capsid shells that allow for the diffusion of macromolecules. CA also has nucleocapsid-like chaperone activity, promoting primer tRNA(i)-Met annealing to the multipartite primer-binding site (PBS), dimerization of Ty1 RNA and initiation of reverse transcription. Its function is as follows. The aspartyl protease (PR) mediates the proteolytic cleavages of the Gag and Gag-Pol polyproteins after assembly of the VLP. Functionally, reverse transcriptase/ribonuclease H (RT) is a multifunctional enzyme that catalyzes the conversion of the retro-elements RNA genome into dsDNA within the VLP. The enzyme displays a DNA polymerase activity that can copy either DNA or RNA templates, and a ribonuclease H (RNase H) activity that cleaves the RNA strand of RNA-DNA heteroduplexes during plus-strand synthesis and hydrolyzes RNA primers. The conversion leads to a linear dsDNA copy of the retrotransposon that includes long terminal repeats (LTRs) at both ends. Integrase (IN) targets the VLP to the nucleus, where a subparticle preintegration complex (PIC) containing at least integrase and the newly synthesized dsDNA copy of the retrotransposon must transit the nuclear membrane. Once in the nucleus, integrase performs the integration of the dsDNA into the host genome. The protein is Transposon TyH3 Gag-Pol polyprotein (TY1B) of Saccharomyces cerevisiae (Baker's yeast).